The chain runs to 402 residues: Phosphoglycerate kinase (402 aa).

Substrate is bound by residues 30–32 (DFN), arginine 46, 70–73 (HLGR), arginine 126, and arginine 159. ATP-binding positions include lysine 210, glutamate 332, and 358–361 (GGDT).

This sequence belongs to the phosphoglycerate kinase family. Monomer.

Its subcellular location is the cytoplasm. It catalyses the reaction (2R)-3-phosphoglycerate + ATP = (2R)-3-phospho-glyceroyl phosphate + ADP. It participates in carbohydrate degradation; glycolysis; pyruvate from D-glyceraldehyde 3-phosphate: step 2/5. The protein is Phosphoglycerate kinase of Helicobacter hepaticus (strain ATCC 51449 / 3B1).